The primary structure comprises 171 residues: Ribosome maturation factor RimM (171 aa).

The PRC barrel domain occupies 94 to 168 (NDEFYKDELI…MTIVPPEIVG (75 aa)).

The protein belongs to the RimM family. As to quaternary structure, binds ribosomal protein uS19.

The protein localises to the cytoplasm. Its function is as follows. An accessory protein needed during the final step in the assembly of 30S ribosomal subunit, possibly for assembly of the head region. Essential for efficient processing of 16S rRNA. May be needed both before and after RbfA during the maturation of 16S rRNA. It has affinity for free ribosomal 30S subunits but not for 70S ribosomes. In Anaplasma phagocytophilum (strain HZ), this protein is Ribosome maturation factor RimM.